Consider the following 650-residue polypeptide: Epithelial sodium channel subunit beta (650 aa).

Residues 1 to 95 (MLLHINPAYL…IICEGPKKKA (95 aa)) are Cytoplasmic-facing. A helical transmembrane segment spans residues 96–116 (MWFLLTLLFTALVCWQWGIFI). At 117 to 542 (RTYLSWEVSV…GGQFGFWMGG (426 aa)) the chain is on the extracellular side. Disulfide bonds link Cys-143–Cys-317, Cys-229–Cys-234, Cys-241–Cys-248, Cys-294–Cys-301, and Cys-406–Cys-458. An N-linked (GlcNAc...) asparagine glycan is attached at Asn-244. A glycan (N-linked (GlcNAc...) asparagine) is linked at Asn-305. A helical membrane pass occupies residues 543–563 (SVLCLIEFGEIIIDFVWITII). Over 564–650 (KLVALAKSLR…IESDSEGDAI (87 aa)) the chain is Cytoplasmic. Positions 600–650 (FQPDTAPRSPNTGPYPNEQALPIPGTPPPNYDSLRLQPLDVIESDSEGDAI) are disordered. A PY motif; recruits WW domain-containing proteins and is thereby required for ubiquitination and inhibition of the channel by NEDD4 and NEDD4L motif is present at residues 626–630 (PPPNY). Acidic residues predominate over residues 641–650 (IESDSEGDAI). Phosphoserine is present on residues Ser-643 and Ser-645.

This sequence belongs to the amiloride-sensitive sodium channel (TC 1.A.6) family. SCNN1B subfamily. Component of the heterotrimeric epithelial sodium channel (ENaC) composed of an alpha/SCNN1A, a beta/SCNN1B and a gamma/SCNN1G subunit. An additional delta/SCNN1D subunit can replace the alpha/SCNN1A subunit to form an alternative channel with specific properties. Interacts with WWP1 (via WW domains). Interacts with WWP2 (via WW domains); inhibits the channel. Interacts with the full-length immature form of PCSK9 (pro-PCSK9). Interacts (N-glycosylated) with BPIFA1; the interaction is direct and inhibits the proteolytic processing of SCNN1A and SCNN1G and the activation of ENaC. Post-translationally, ubiquitinated. Can be ubiquitinated at multiple sites and undergo monoubiquitination and polyubiquitination. Ubiquitination by NEDD4 or NEDD4L inhibits the ENaC channel through endocytosis, intracellular retention and degradation of its individual subunits. However, some studies could not confirm the ubiquitination of this subunit of the ENaC. In terms of processing, phosphorylated on serine and threonine residues. Aldosterone and insulin increase the basal level of phosphorylation. N-glycosylated. N-glycosylation is required for interaction with BPIFA1.

The protein localises to the apical cell membrane. It localises to the cytoplasmic vesicle membrane. The catalysed reaction is Na(+)(in) = Na(+)(out). With respect to regulation, originally identified and characterized by its inhibition by the diuretic drug amiloride. Functionally, this is one of the three pore-forming subunits of the heterotrimeric epithelial sodium channel (ENaC), a critical regulator of sodium balance and fluid homeostasis. ENaC operates in epithelial tissues, where it mediates the electrodiffusion of sodium ions from extracellular fluid through the apical membrane of cells, with water following osmotically. It plays a key role in maintaining sodium homeostasis through electrogenic sodium reabsorption in the kidneys. Additionally, ENaC is essential for airway surface liquid homeostasis, which is crucial for proper mucus clearance. This Pan troglodytes (Chimpanzee) protein is Epithelial sodium channel subunit beta.